The following is a 78-amino-acid chain: RNA-binding protein KhpA (78 aa).

One can recognise a KH domain in the interval 29–78; that stretch reads TIIYELSVAKPDIGKIIGKEGRTIKAIRTLLVSVASRNNVRVSLEIMEEK.

It belongs to the KhpA RNA-binding protein family.

It is found in the cytoplasm. Its function is as follows. A probable RNA-binding protein. This is RNA-binding protein KhpA from Chlamydia pneumoniae (Chlamydophila pneumoniae).